We begin with the raw amino-acid sequence, 1288 residues long: VWFA and cache domain-containing protein 1 (1288 aa).

Positions 1-49 are cleaved as a signal peptide; it reads MAREPEEEETVRPAAVVRRCPRCPGWPGAPRPPLWLLCLVACWILGAVA. Residues 50–1109 lie on the Extracellular side of the membrane; the sequence is DADFSILDEA…ITLNMIKSAP (1060 aa). The N-linked (GlcNAc...) asparagine glycan is linked to asparagine 159. The region spanning 242–457 is the VWFA domain; sequence HIVVILDHGA…TTVGRFYTNL (216 aa). Cache domains are found at residues 467 to 546 and 786 to 867; these read FSLP…SEPP and LTGP…HPTL. A helical membrane pass occupies residues 1110-1130; that stretch reads VGPVAGGIMGCIMVLVLAVYA. The Cytoplasmic portion of the chain corresponds to 1131 to 1288; that stretch reads YRHQIHRRSH…VTVHTVDAEC (158 aa). 2 disordered regions span residues 1157–1176 and 1187–1237; these read NLENDRDERDDDSHEDRGII and ERHV…VDVG. Basic and acidic residues predominate over residues 1159-1174; sequence ENDRDERDDDSHEDRG. The span at 1210–1229 shows a compositional bias: polar residues; sequence GYSTMSPQEDSENPPCNNDP.

This sequence belongs to the calcium channel subunit alpha-2/delta family.

It is found in the membrane. In terms of biological role, may regulate voltage-dependent calcium channels. The sequence is that of VWFA and cache domain-containing protein 1 (Cachd1) from Mus musculus (Mouse).